We begin with the raw amino-acid sequence, 817 residues long: DNA replication licensing factor Mcm6 (817 aa).

The segment at 152 to 179 (CLDCQTEIRNVEQQFKFTNPTICRNPVC) adopts a C4-type zinc-finger fold. The MCM domain occupies 338 to 544 (LYQNLISSLF…VVDYAIARKI (207 aa)). 6 residues coordinate ATP: Ser-391, Thr-392, Ala-393, Lys-394, Ser-395, and Asn-496. The Arginine finger signature appears at 520 to 523 (SRFD). 2 residues coordinate ADP: Arg-611 and Glu-614.

It belongs to the MCM family. Component of the Mcm2-7 complex. The complex forms a toroidal hexameric ring with the proposed subunit order Mcm2-Mcm6-Mcm4-Mcm7-Mcm3-Mcm5. The heterodimers of Mcm4/Mcm6 and Mcm3/Mcm5 interact with Mcm2 and Mcm7. In terms of tissue distribution, in stage 12 embryos, strongly expressed in the CNS and weakly in the gut.

The protein resides in the nucleus. The catalysed reaction is ATP + H2O = ADP + phosphate + H(+). Functionally, acts as a component of the Mcm2-7 complex (Mcm complex) which is the putative replicative helicase essential for 'once per cell cycle' DNA replication initiation and elongation in eukaryotic cells. Core component of CDC45-MCM-GINS (CMG) helicase, the molecular machine that unwinds template DNA during replication, and around which the replisome is built. The active ATPase sites in the Mcm2-7 ring are formed through the interaction surfaces of two neighboring subunits such that a critical structure of a conserved arginine finger motif is provided in trans relative to the ATP-binding site of the Walker A box of the adjacent subunit. The six ATPase active sites, however, are likely to contribute differentially to the complex helicase activity Required for DNA replication and cell proliferation. Required for mitotic cycles, endocycles, and the special S phase associated with the amplification of chorion genes; has a role in origin unwinding or fork elongation at chorion loci. The polypeptide is DNA replication licensing factor Mcm6 (Drosophila melanogaster (Fruit fly)).